A 128-amino-acid chain; its full sequence is Putative pre-16S rRNA nuclease (128 aa).

This sequence belongs to the YqgF nuclease family.

Its subcellular location is the cytoplasm. Could be a nuclease involved in processing of the 5'-end of pre-16S rRNA. This is Putative pre-16S rRNA nuclease from Campylobacter lari (strain RM2100 / D67 / ATCC BAA-1060).